A 522-amino-acid chain; its full sequence is GMP synthase [glutamine-hydrolyzing] (522 aa).

Positions 9 to 204 (KILILDFGAQ…VVDICGCQTL (196 aa)) constitute a Glutamine amidotransferase type-1 domain. The active-site Nucleophile is the cysteine 86. Residues histidine 178 and glutamate 180 contribute to the active site. A GMPS ATP-PPase domain is found at 205–397 (WTAANIIEDQ…LGLPHAMVYR (193 aa)). Residue 232 to 238 (SGGVDSS) participates in ATP binding.

Homodimer.

The catalysed reaction is XMP + L-glutamine + ATP + H2O = GMP + L-glutamate + AMP + diphosphate + 2 H(+). Its pathway is purine metabolism; GMP biosynthesis; GMP from XMP (L-Gln route): step 1/1. In terms of biological role, catalyzes the synthesis of GMP from XMP. This Xylella fastidiosa (strain M12) protein is GMP synthase [glutamine-hydrolyzing].